The primary structure comprises 407 residues: Serine/threonine transporter SstT (407 aa).

Helical transmembrane passes span 11 to 31 (IIHG…VILA), 43 to 63 (FLGD…VFVL), 82 to 102 (IISL…LLSF), 141 to 161 (ALMT…GIAL), 192 to 212 (LGIF…ALAG), 216 to 236 (LLMV…PLIV), 298 to 318 (MGGA…TLGV), 339 to 359 (ASGV…LFGI), and 363 to 383 (IAMQ…SAET).

Belongs to the dicarboxylate/amino acid:cation symporter (DAACS) (TC 2.A.23) family.

Its subcellular location is the cell inner membrane. The catalysed reaction is L-serine(in) + Na(+)(in) = L-serine(out) + Na(+)(out). It carries out the reaction L-threonine(in) + Na(+)(in) = L-threonine(out) + Na(+)(out). Functionally, involved in the import of serine and threonine into the cell, with the concomitant import of sodium (symport system). The protein is Serine/threonine transporter SstT of Shewanella denitrificans (strain OS217 / ATCC BAA-1090 / DSM 15013).